Here is a 274-residue protein sequence, read N- to C-terminus: Cyclase-like protein 1 (274 aa).

Positions 1 to 18 are cleaved as a signal peptide; that stretch reads MAASRLALLLLVLAVAAA.

This sequence belongs to the Cyclase 1 superfamily. As to expression, highly expressed in leaf sheaths. Expressed in leaf collars.

The protein resides in the secreted. The protein localises to the extracellular space. It is found in the extracellular matrix. Its function is as follows. May be involved in response to stresses. The polypeptide is Cyclase-like protein 1 (Oryza sativa subsp. japonica (Rice)).